Here is a 202-residue protein sequence, read N- to C-terminus: uncharacterized protein (202 aa).

The N-terminal stretch at 1 to 18 is a signal peptide; that stretch reads MKNRLLILSLLVSVPAFA.

This sequence to E.coli YebB.

This is an uncharacterized protein from Escherichia coli (strain K12).